The following is a 274-amino-acid chain: Large ribosomal subunit protein uL2 (274 aa).

A disordered region spans residues 224 to 274; it reads AMNPVDHPHGGGEGRTGEGQVPVSPWNTMTKGYRTRSNKRTQTFIVSRRKK. Over residues 229–239 the composition is skewed to basic and acidic residues; the sequence is DHPHGGGEGRT.

It belongs to the universal ribosomal protein uL2 family. In terms of assembly, part of the 50S ribosomal subunit. Forms a bridge to the 30S subunit in the 70S ribosome.

One of the primary rRNA binding proteins. Required for association of the 30S and 50S subunits to form the 70S ribosome, for tRNA binding and peptide bond formation. It has been suggested to have peptidyltransferase activity; this is somewhat controversial. Makes several contacts with the 16S rRNA in the 70S ribosome. This Methylibium petroleiphilum (strain ATCC BAA-1232 / LMG 22953 / PM1) protein is Large ribosomal subunit protein uL2.